A 75-amino-acid chain; its full sequence is Small ribosomal subunit protein bS18 (75 aa).

Belongs to the bacterial ribosomal protein bS18 family. In terms of assembly, part of the 30S ribosomal subunit. Forms a tight heterodimer with protein bS6.

Its function is as follows. Binds as a heterodimer with protein bS6 to the central domain of the 16S rRNA, where it helps stabilize the platform of the 30S subunit. The chain is Small ribosomal subunit protein bS18 from Dinoroseobacter shibae (strain DSM 16493 / NCIMB 14021 / DFL 12).